A 90-amino-acid chain; its full sequence is Cell division topological specificity factor (90 aa).

The protein belongs to the MinE family.

Its function is as follows. Prevents the cell division inhibition by proteins MinC and MinD at internal division sites while permitting inhibition at polar sites. This ensures cell division at the proper site by restricting the formation of a division septum at the midpoint of the long axis of the cell. The sequence is that of Cell division topological specificity factor from Francisella philomiragia subsp. philomiragia (strain ATCC 25017 / CCUG 19701 / FSC 153 / O#319-036).